Consider the following 202-residue polypeptide: Peptidyl-tRNA hydrolase (202 aa).

Residue Y14 coordinates tRNA. H19 (proton acceptor) is an active-site residue. 3 residues coordinate tRNA: F64, N66, and N112.

Belongs to the PTH family. In terms of assembly, monomer.

It localises to the cytoplasm. The enzyme catalyses an N-acyl-L-alpha-aminoacyl-tRNA + H2O = an N-acyl-L-amino acid + a tRNA + H(+). Hydrolyzes ribosome-free peptidyl-tRNAs (with 1 or more amino acids incorporated), which drop off the ribosome during protein synthesis, or as a result of ribosome stalling. Its function is as follows. Catalyzes the release of premature peptidyl moieties from peptidyl-tRNA molecules trapped in stalled 50S ribosomal subunits, and thus maintains levels of free tRNAs and 50S ribosomes. In Methylobacterium radiotolerans (strain ATCC 27329 / DSM 1819 / JCM 2831 / NBRC 15690 / NCIMB 10815 / 0-1), this protein is Peptidyl-tRNA hydrolase.